A 457-amino-acid polypeptide reads, in one-letter code: Probable xyloglucan 6-xylosyltransferase 5 (457 aa).

The segment at Met-1 to Gly-40 is disordered. Topologically, residues Met-1 to Lys-51 are cytoplasmic. The segment covering Asn-26–Leu-37 has biased composition (gly residues). A helical; Signal-anchor for type II membrane protein transmembrane segment spans residues Ile-52 to Asn-72. At Leu-73–Asn-457 the chain is on the lumenal side. A disordered region spans residues Arg-97–Asn-116. The span at Asp-101–Glu-110 shows a compositional bias: acidic residues. 2 N-linked (GlcNAc...) asparagine glycosylation sites follow: Asn-116 and Asn-432.

Belongs to the glycosyltransferase 34 family. In terms of assembly, interacts with XXT2 and CSLC4. Interacts with FUT1 and XLT2. Highly expressed in roots, stems and cauline leaves, and at lower levels in rosette leaves, flowers and siliques.

Its subcellular location is the golgi apparatus membrane. It catalyses the reaction Transfers an alpha-D-xylosyl residue from UDP-D-xylose to a glucose residue in xyloglucan, forming an alpha-(1-&gt;6)-D-xylosyl-D-glucose linkage.. Probable xyloglucan xylosyltransferase involved in the biosynthesis of xyloglucan in roots. May act in association with XXT1 and XXT2. Associates with other xyloglucan-synthesizing enzymes to form multiprotein complexes for xyloglucan synthesis in the Golgi. The sequence is that of Probable xyloglucan 6-xylosyltransferase 5 from Arabidopsis thaliana (Mouse-ear cress).